A 140-amino-acid polypeptide reads, in one-letter code: Organic hydroperoxide resistance protein-like (140 aa).

Belongs to the OsmC/Ohr family.

This is Organic hydroperoxide resistance protein-like from Staphylococcus aureus (strain USA300).